The sequence spans 183 residues: uncharacterized protein (183 aa).

The signal sequence occupies residues 1–17 (MVLFILVLYTCIQDGNG).

This is an uncharacterized protein from Saccharomyces cerevisiae (strain ATCC 204508 / S288c) (Baker's yeast).